Here is a 235-residue protein sequence, read N- to C-terminus: Phosphoribosylaminoimidazole-succinocarboxamide synthase (235 aa).

Belongs to the SAICAR synthetase family.

The catalysed reaction is 5-amino-1-(5-phospho-D-ribosyl)imidazole-4-carboxylate + L-aspartate + ATP = (2S)-2-[5-amino-1-(5-phospho-beta-D-ribosyl)imidazole-4-carboxamido]succinate + ADP + phosphate + 2 H(+). Its pathway is purine metabolism; IMP biosynthesis via de novo pathway; 5-amino-1-(5-phospho-D-ribosyl)imidazole-4-carboxamide from 5-amino-1-(5-phospho-D-ribosyl)imidazole-4-carboxylate: step 1/2. In Streptococcus pneumoniae (strain ATCC 700669 / Spain 23F-1), this protein is Phosphoribosylaminoimidazole-succinocarboxamide synthase.